The chain runs to 291 residues: Polyamine aminopropyltransferase (291 aa).

The 241-residue stretch at 5-245 folds into the PABS domain; the sequence is PGPIVLMEPL…YAVNFVLGSL (241 aa). An S-methyl-5'-thioadenosine-binding site is contributed by Gln-36. Spermidine is bound by residues His-67 and Glu-91. Residues Asp-111 and 143–144 each bind S-methyl-5'-thioadenosine; that span reads DG. Asp-164 (proton acceptor) is an active-site residue.

This sequence belongs to the spermidine/spermine synthase family. In terms of assembly, homodimer or homotetramer.

It localises to the cytoplasm. It carries out the reaction norspermidine + S-adenosyl 3-(methylsulfanyl)propylamine = norspermine + S-methyl-5'-thioadenosine + H(+). The catalysed reaction is S-adenosyl 3-(methylsulfanyl)propylamine + spermidine = thermospermine + S-methyl-5'-thioadenosine + H(+). Involved in the biosynthesis of polyamines which are thought to support the growth of thermophilic microorganisms under high-temperature conditions. It seems that long-chain and branched-chain of polyamines effectively stabilize DNA and RNA, respectively. Catalyzes the irreversible transfer of a propylamine group from the amino donor S-adenosylmethioninamine (decarboxy-AdoMet) to norspermidine and 1,3-diaminopropane to yield norspermine, and to spermidine to yield thermospermine. It can also synthesize thermospermine from putrescine (1,4-diaminobutane) and caldopentamine from norspermine with a very low activity. The biosynthesis of caldohexamine and caldoheptamine from caldopentamine has been also observed. This Pyrobaculum aerophilum (strain ATCC 51768 / DSM 7523 / JCM 9630 / CIP 104966 / NBRC 100827 / IM2) protein is Polyamine aminopropyltransferase.